The following is a 368-amino-acid chain: Biotin synthase (368 aa).

The region spanning 46-277 is the Radical SAM core domain; sequence VHGDEVALCG…AAHIFVMGGR (232 aa). Residues Cys64, Cys68, and Cys71 each coordinate [4Fe-4S] cluster. Residues Ser109, Cys142, and Cys202 each coordinate [2Fe-2S] cluster. Residues 347-368 form a disordered region; sequence RAAEPGGKRGLPVVGPPRGGCA.

It belongs to the radical SAM superfamily. Biotin synthase family. As to quaternary structure, homodimer. It depends on [4Fe-4S] cluster as a cofactor. [2Fe-2S] cluster serves as cofactor.

The catalysed reaction is (4R,5S)-dethiobiotin + (sulfur carrier)-SH + 2 reduced [2Fe-2S]-[ferredoxin] + 2 S-adenosyl-L-methionine = (sulfur carrier)-H + biotin + 2 5'-deoxyadenosine + 2 L-methionine + 2 oxidized [2Fe-2S]-[ferredoxin]. Its pathway is cofactor biosynthesis; biotin biosynthesis; biotin from 7,8-diaminononanoate: step 2/2. Its function is as follows. Catalyzes the conversion of dethiobiotin (DTB) to biotin by the insertion of a sulfur atom into dethiobiotin via a radical-based mechanism. This is Biotin synthase from Anaeromyxobacter sp. (strain Fw109-5).